We begin with the raw amino-acid sequence, 648 residues long: Biosynthetic arginine decarboxylase (648 aa).

N6-(pyridoxal phosphate)lysine is present on Lys109. 291–301 (IDVGGGLGIDF) lines the substrate pocket.

The protein belongs to the Orn/Lys/Arg decarboxylase class-II family. SpeA subfamily. Requires Mg(2+) as cofactor. It depends on pyridoxal 5'-phosphate as a cofactor.

The enzyme catalyses L-arginine + H(+) = agmatine + CO2. It participates in amine and polyamine biosynthesis; agmatine biosynthesis; agmatine from L-arginine: step 1/1. Catalyzes the biosynthesis of agmatine from arginine. The protein is Biosynthetic arginine decarboxylase of Prochlorococcus marinus (strain MIT 9312).